The sequence spans 246 residues: MALIEGVGDEVTILFSALACLLVLALAWVSTHTAEGADPLPQPSGTPTPTQPSEAMAVTDSIRGEAPGAETPGLRHRGQAAPPEPSVGLAATPPPPDSPQEPLVLRLKFLNDSEQVARAWPHDTIGSLKRTQFPGREQHVRLIYQGQLLGDDTQTLGSLHLPPNCVLHCHVSTRVGPPLPPCPPGSEPGPSGLEVGSLLLPLLLLLLLLLWYCQIQYRPFFPLTATLGLAGFTLLLSLLAFAMYRP.

A required to release iHOPS from membranes region spans residues 2 to 30 (ALIEGVGDEVTILFSALACLLVLALAWVS). The helical transmembrane segment at 11-31 (VTILFSALACLLVLALAWVST) threads the bilayer. Residues 35–102 (EGADPLPQPS…PPPPDSPQEP (68 aa)) are disordered. Residues 40-50 (LPQPSGTPTPT) are compositionally biased toward pro residues. Phosphothreonine occurs at positions 71 and 92. Serine 98 and serine 127 each carry phosphoserine. In terms of domain architecture, Ubiquitin-like spans 103–176 (LVLRLKFLND…LHCHVSTRVG (74 aa)). 2 helical membrane passes run 195–215 (VGSLLLPLLLLLLLLLWYCQI) and 221–241 (FPLTATLGLAGFTLLLSLLAF).

As to quaternary structure, interacts with EEF1A1, GRIA2, GRIP1, CAMLG, TUBG1. Interacts with NPM1 and CDKN2A; TMUB1 can enhance interaction between NPM1 and CDKN2A and is proposed to bridge the proteins; proposed to be mediated by iHOPS. Interacts with ERLIN2 and AMFR; TMUB1 promotes the interaction of ERLIN2 with AMFR. In terms of processing, processed by regulated intramembrane proteolysis (RIP) in the N-terminus to release iHOPS from membranes.

The protein localises to the membrane. Its subcellular location is the postsynaptic cell membrane. The protein resides in the recycling endosome. It is found in the cytoplasm. It localises to the nucleus. The protein localises to the nucleolus. Its subcellular location is the cytoskeleton. The protein resides in the microtubule organizing center. It is found in the centrosome. Its function is as follows. Involved in sterol-regulated ubiquitination and degradation of HMG-CoA reductase HMGCR. Involved in positive regulation of AMPA-selective glutamate receptor GRIA2 recycling to the cell surface. Acts as negative regulator of hepatocyte growth during regeneration. Functionally, may contribute to the regulation of translation during cell-cycle progression. May contribute to the regulation of cell proliferation. May be involved in centrosome assembly. Modulates stabilization and nucleolar localization of tumor suppressor CDKN2A and enhances association between CDKN2A and NPM1. The polypeptide is Transmembrane and ubiquitin-like domain-containing protein 1 (TMUB1) (Bos taurus (Bovine)).